The following is a 466-amino-acid chain: 55 kDa erythrocyte membrane protein (466 aa).

Threonine 2 carries the N-acetylthreonine modification. Serine 19 is subject to Phosphoserine. Threonine 49 carries the phosphothreonine modification. Phosphoserine is present on residues serine 57 and serine 110. In terms of domain architecture, PDZ spans 71-152; the sequence is LIQFEKVTEE…MISLKVIPNQ (82 aa). The region spanning 158 to 228 is the SH3 domain; the sequence is ALQMFMRAQF…PSPELQEWRV (71 aa). Serine 243 is modified (phosphoserine). The interaction with PALS1 stretch occupies residues 268-466; sequence VVSYEEVVRL…PQWVPVSWVY (199 aa). The region spanning 282 to 451 is the Guanylate kinase-like domain; it reads RKTLVLIGAS…TLKTLQETFD (170 aa).

It belongs to the MAGUK family. As to quaternary structure, heterodimer with PALS1. Interacts with DLG5 and NF2. Interacts (via guanylate kinase-like domain) with WHRN (via third PDZ domain). Interacts with PALS1. Palmitoylated.

It localises to the cell membrane. Its subcellular location is the cell projection. The protein resides in the stereocilium. Essential regulator of neutrophil polarity. Regulates neutrophil polarization by regulating AKT1 phosphorylation through a mechanism that is independent of PIK3CG activity. This chain is 55 kDa erythrocyte membrane protein (MPP1), found in Bos taurus (Bovine).